The sequence spans 397 residues: DNA-directed RNA polymerase subunit Rpo1C (397 aa).

It belongs to the RNA polymerase beta' chain family. In terms of assembly, part of the RNA polymerase complex.

The protein resides in the cytoplasm. The enzyme catalyses RNA(n) + a ribonucleoside 5'-triphosphate = RNA(n+1) + diphosphate. DNA-dependent RNA polymerase (RNAP) catalyzes the transcription of DNA into RNA using the four ribonucleoside triphosphates as substrates. Forms part of the jaw domain. The protein is DNA-directed RNA polymerase subunit Rpo1C of Pyrococcus abyssi (strain GE5 / Orsay).